A 301-amino-acid chain; its full sequence is uncharacterized protein (301 aa).

Residues serine 44 and tyrosine 107 each act as charge relay system in the active site. Tyrosine 133 functions as the Proton donor in the catalytic mechanism. Lysine 162 acts as the Schiff-base intermediate with substrate in catalysis.

It belongs to the DapA family. As to quaternary structure, homotetramer.

Its subcellular location is the cytoplasm. This is an uncharacterized protein from Pyrobaculum aerophilum (strain ATCC 51768 / DSM 7523 / JCM 9630 / CIP 104966 / NBRC 100827 / IM2).